We begin with the raw amino-acid sequence, 699 residues long: LMBR1 domain-containing protein 2 homolog (699 aa).

Residues 1-3 (MAY) lie on the Extracellular side of the membrane. Residues 4-26 (LLTFGIIAALCLASISLYRYGNI) form a helical membrane-spanning segment. The Cytoplasmic portion of the chain corresponds to 27–30 (PRQH). A helical transmembrane segment spans residues 31–51 (ILVTLSVLTAWCFSFLIVFTI). Residues 52–106 (PLDVTSTLYRQCLAEHKLALDAAGNASTTANITPPPECQEPWGMVPESVFPNLWR) are Extracellular-facing. N-linked (GlcNAc...) asparagine glycosylation is present at Asn76. The helical transmembrane segment at 107-127 (IIYWSSQFLTWLIMPLMQSYL) threads the bilayer. Residues 128-144 (KAGDFTIKGKLKSALIE) are Cytoplasmic-facing. Residues 145–165 (NAIYYGSYLFICGVLLIYIAV) form a helical membrane-spanning segment. At 166–181 (KGVPLDWQKLKAIASS) the chain is on the extracellular side. A helical membrane pass occupies residues 182–202 (ASNTWGLFLLILLLGYALVEV). Topologically, residues 203 to 381 (PRSLWNNAKP…ECLLKAPFLK (179 aa)) are cytoplasmic. Residues 382–402 (TLCVVTATMSAMVVWSEVTFF) form a helical membrane-spanning segment. The Extracellular portion of the chain corresponds to 403–426 (SRDPVLSIFANVIYLAKESYDFFT). A helical transmembrane segment spans residues 427–447 (IEVFSMMVLCYFFYCTYSTIL). The Cytoplasmic segment spans residues 448–467 (RIRFLNLYYLAPHHQTNEHS). A helical membrane pass occupies residues 468-488 (LIFSGMLLCRLTPPMCLNFLG). At 489–514 (LIHMDSHIIPERMMETYYTRIMGHMD) the chain is on the extracellular side. Residues 515-535 (VIGIISNGFNIYFPMCMLAFC) form a helical membrane-spanning segment. The Cytoplasmic segment spans residues 536–699 (LSTWFSLGSR…PPPRGLFDDV (164 aa)). The stretch at 564-592 (ELVQEGKDLIAREKRRRQRAEEAMARRRD) forms a coiled coil. The segment at 669–699 (FRGTSELDPDYEAENERRIVGPPPRGLFDDV) is disordered.

Belongs to the LIMR family.

The protein resides in the membrane. This chain is LMBR1 domain-containing protein 2 homolog, found in Drosophila pseudoobscura pseudoobscura (Fruit fly).